The primary structure comprises 264 residues: Thymidylate synthase (264 aa).

Residues R21 and 126–127 (RR) contribute to the dUMP site. The active-site Nucleophile is C146. Residues 166-169 (RSAD), N177, and 207-209 (HLY) contribute to the dUMP site. A (6R)-5,10-methylene-5,6,7,8-tetrahydrofolate-binding site is contributed by D169. A263 serves as a coordination point for (6R)-5,10-methylene-5,6,7,8-tetrahydrofolate.

This sequence belongs to the thymidylate synthase family. Bacterial-type ThyA subfamily. Homodimer.

The protein resides in the cytoplasm. It carries out the reaction dUMP + (6R)-5,10-methylene-5,6,7,8-tetrahydrofolate = 7,8-dihydrofolate + dTMP. The protein operates within pyrimidine metabolism; dTTP biosynthesis. In terms of biological role, catalyzes the reductive methylation of 2'-deoxyuridine-5'-monophosphate (dUMP) to 2'-deoxythymidine-5'-monophosphate (dTMP) while utilizing 5,10-methylenetetrahydrofolate (mTHF) as the methyl donor and reductant in the reaction, yielding dihydrofolate (DHF) as a by-product. This enzymatic reaction provides an intracellular de novo source of dTMP, an essential precursor for DNA biosynthesis. The protein is Thymidylate synthase of Bradyrhizobium sp. (strain ORS 278).